Consider the following 623-residue polypeptide: Kelch-like protein diablo (623 aa).

The interval 1–54 is disordered; that stretch reads MGDLPGSGSTAQPRDAAVTGTGGNSTAGGGSSVGSTAVDRPPSPARLSHTSEKH. A Phosphothreonine modification is found at Thr-19. Residues 20–32 show a composition bias toward gly residues; that stretch reads GTGGNSTAGGGSS. The BTB domain maps to 72–139; it reads CDVVLNVGGR…CYTAHIIVEE (68 aa). The region spanning 174–276 is the BACK domain; that stretch reads CLGIRAFADT…SPKFLVGTVG (103 aa). 6 Kelch repeats span residues 323 to 369, 371 to 417, 418 to 464, 466 to 511, 513 to 558, and 559 to 605; these read VLFA…VLND, LYAV…VLDE, FLYA…VLGG, LYAI…VFNN, IYAV…VVNG, and QLYA…VMRA.

It functions in the pathway protein modification; protein ubiquitination. Functionally, probable substrate-specific adapter of an E3 ubiquitin-protein ligase complex which mediates the ubiquitination and subsequent proteasomal degradation of target proteins. May have a role in synapse differentiation and growth. The protein is Kelch-like protein diablo of Drosophila simulans (Fruit fly).